A 265-amino-acid chain; its full sequence is GTP cyclohydrolase FolE2 (265 aa).

Belongs to the GTP cyclohydrolase IV family.

The enzyme catalyses GTP + H2O = 7,8-dihydroneopterin 3'-triphosphate + formate + H(+). The protein operates within cofactor biosynthesis; 7,8-dihydroneopterin triphosphate biosynthesis; 7,8-dihydroneopterin triphosphate from GTP: step 1/1. Functionally, converts GTP to 7,8-dihydroneopterin triphosphate. This is GTP cyclohydrolase FolE2 from Bordetella avium (strain 197N).